The following is a 503-amino-acid chain: Mitogen-activated protein kinase kinae mkk2 (503 aa).

A disordered region spans residues 1–130 (MSSSPVPLLR…ASGPASASSS (130 aa)). Positions 53-66 (APQPQRPSTRPAPP) are enriched in pro residues. Residues 100–115 (TGLNESTGHSRSSSFT) show a composition bias toward polar residues. Over residues 121–130 (ASGPASASSS) the composition is skewed to low complexity. Residues 211-481 (IIELGSLGEG…PWRMLEHPWM (271 aa)) enclose the Protein kinase domain. Residues 217 to 225 (LGEGAGGAV) and K240 each bind ATP. The active-site Proton acceptor is the D338.

The protein belongs to the protein kinase superfamily. STE Ser/Thr protein kinase family. MAP kinase kinase subfamily.

It catalyses the reaction L-seryl-[protein] + ATP = O-phospho-L-seryl-[protein] + ADP + H(+). It carries out the reaction L-threonyl-[protein] + ATP = O-phospho-L-threonyl-[protein] + ADP + H(+). In terms of biological role, mitogen-activated kinase kinase (MAPKK), part of the cell wall integrity (CWI) signaling pathway composed by three protein kinases bck1, mkk2 and mpkA and responsible for the maintaining of cell-wall integrity balance. The CWI pathway also regulates the oxidative stress response, as well as the production of some secondary metabolites including pyomelanin. This Aspergillus fumigatus (strain CBS 144.89 / FGSC A1163 / CEA10) (Neosartorya fumigata) protein is Mitogen-activated protein kinase kinae mkk2.